The primary structure comprises 732 residues: Subtilisin-like protease SBT4.13 (732 aa).

A signal peptide spans 1-24 (MATLAASSSLLSCLLVLFLSSVSA). Residues 25 to 109 (VTDDKQVYIV…VFPNKKLQLQ (85 aa)) constitute a propeptide, activation peptide. An Inhibitor I9 domain is found at 31 to 108 (VYIVYMGSLS…SVFPNKKLQL (78 aa)). The region spanning 113–579 (SWDFMGLKEG…SGHVDPIAAS (467 aa)) is the Peptidase S8 domain. The active-site Charge relay system is D141. N172 carries an N-linked (GlcNAc...) asparagine glycan. H196 (charge relay system) is an active-site residue. N219 carries N-linked (GlcNAc...) asparagine glycosylation. A PA domain is found at 352–436 (DYPLVYGKSA…GLLTEDFESL (85 aa)). N-linked (GlcNAc...) asparagine glycosylation is present at N458. The Charge relay system role is filled by S518. N555, N600, N648, and N658 each carry an N-linked (GlcNAc...) asparagine glycan.

This sequence belongs to the peptidase S8 family. In terms of processing, the C-terminal propeptide is autocleaved.

The protein resides in the secreted. The sequence is that of Subtilisin-like protease SBT4.13 from Arabidopsis thaliana (Mouse-ear cress).